Here is a 290-residue protein sequence, read N- to C-terminus: Probable branched-chain-amino-acid aminotransferase (290 aa).

Lys-155 carries the post-translational modification N6-(pyridoxal phosphate)lysine.

The protein belongs to the class-IV pyridoxal-phosphate-dependent aminotransferase family. The cofactor is pyridoxal 5'-phosphate.

The enzyme catalyses L-leucine + 2-oxoglutarate = 4-methyl-2-oxopentanoate + L-glutamate. The catalysed reaction is L-isoleucine + 2-oxoglutarate = (S)-3-methyl-2-oxopentanoate + L-glutamate. It carries out the reaction L-valine + 2-oxoglutarate = 3-methyl-2-oxobutanoate + L-glutamate. It participates in amino-acid biosynthesis; L-isoleucine biosynthesis; L-isoleucine from 2-oxobutanoate: step 4/4. Its pathway is amino-acid biosynthesis; L-leucine biosynthesis; L-leucine from 3-methyl-2-oxobutanoate: step 4/4. The protein operates within amino-acid biosynthesis; L-valine biosynthesis; L-valine from pyruvate: step 4/4. In terms of biological role, acts on leucine, isoleucine and valine. This chain is Probable branched-chain-amino-acid aminotransferase (ilvE), found in Rickettsia conorii (strain ATCC VR-613 / Malish 7).